The sequence spans 914 residues: Isoleucine--tRNA ligase (914 aa).

Residues 57–67 carry the 'HIGH' region motif; it reads PYANGQIHMGH. Residue glutamate 554 coordinates L-isoleucyl-5'-AMP. The short motif at 595-599 is the 'KMSKS' region element; the sequence is KMSKS. Lysine 598 is a binding site for ATP. Zn(2+) is bound by residues cysteine 883, cysteine 886, cysteine 904, and cysteine 907.

The protein belongs to the class-I aminoacyl-tRNA synthetase family. IleS type 1 subfamily. Monomer. It depends on Zn(2+) as a cofactor.

Its subcellular location is the cytoplasm. The enzyme catalyses tRNA(Ile) + L-isoleucine + ATP = L-isoleucyl-tRNA(Ile) + AMP + diphosphate. Its function is as follows. Catalyzes the attachment of isoleucine to tRNA(Ile). As IleRS can inadvertently accommodate and process structurally similar amino acids such as valine, to avoid such errors it has two additional distinct tRNA(Ile)-dependent editing activities. One activity is designated as 'pretransfer' editing and involves the hydrolysis of activated Val-AMP. The other activity is designated 'posttransfer' editing and involves deacylation of mischarged Val-tRNA(Ile). The sequence is that of Isoleucine--tRNA ligase from Macrococcus caseolyticus (strain JCSC5402) (Macrococcoides caseolyticum).